Reading from the N-terminus, the 307-residue chain is Putative S-adenosyl-L-methionine-dependent methyltransferase Mflv_5025 (307 aa).

Residues Asp-130 and 159 to 160 contribute to the S-adenosyl-L-methionine site; that span reads DL.

This sequence belongs to the UPF0677 family.

Its function is as follows. Exhibits S-adenosyl-L-methionine-dependent methyltransferase activity. This is Putative S-adenosyl-L-methionine-dependent methyltransferase Mflv_5025 from Mycolicibacterium gilvum (strain PYR-GCK) (Mycobacterium gilvum (strain PYR-GCK)).